Here is a 264-residue protein sequence, read N- to C-terminus: 5'-nucleotidase SurE (264 aa).

The a divalent metal cation site is built by aspartate 10, aspartate 11, serine 43, and asparagine 97.

It belongs to the SurE nucleotidase family. The cofactor is a divalent metal cation.

The protein localises to the cytoplasm. It catalyses the reaction a ribonucleoside 5'-phosphate + H2O = a ribonucleoside + phosphate. Its function is as follows. Nucleotidase that shows phosphatase activity on nucleoside 5'-monophosphates. This chain is 5'-nucleotidase SurE, found in Sulfurimonas denitrificans (strain ATCC 33889 / DSM 1251) (Thiomicrospira denitrificans (strain ATCC 33889 / DSM 1251)).